Reading from the N-terminus, the 503-residue chain is MEEFQRYLELDRSRQHDFLYPLLFREYIYALAHDHGLNKSILSENAGYGNKSSSIIVKRLITRMYQQNPLIFSANDSIQNQFFGHNKNLYSQIISEGFAVIVEIPFSLRLVSFLERKEIAKSQNLQSIHSIFPFLEDKFSHLDYVSXVLIPYHIHLEILVQTLRYWVKDASSLHLLRFFLHEYWNTLITPKKYITLFSKGNPRLFLFLYNSHICEYESIFLFLRNKSSHLRSTSSGIFFERIYFYVKIKHFVKVFFDNDFQCILWFFKDPFMHYVKYQGKSILASKXTPLLMNKWKYYLVNLWQYHFYAWFQPGRININQLCXYSLDFLGYRSSVRLNSSVVXXQMLKNLFLINNAMKXFETIVPIIPLIGSLSKANFCNTLGHPISKPTRSDSSDSDIINRFLRICRNLSHYHSGSSKKKSLYRVKYILRLSCVKTLARKHKITIRTFLKKSGSEFLEKFLTEEEVVLSLIFPRTYSTSRRLYXZQSWYLDITSINDLVNYE.

This sequence belongs to the intron maturase 2 family. MatK subfamily.

It is found in the plastid. It localises to the chloroplast. Its function is as follows. Usually encoded in the trnK tRNA gene intron. Probably assists in splicing its own and other chloroplast group II introns. This is Maturase K from Backhousia subargentea (Giant ironwood).